A 216-amino-acid polypeptide reads, in one-letter code: Peptide methionine sulfoxide reductase MsrA (216 aa).

Cysteine 54 is a catalytic residue.

The protein belongs to the MsrA Met sulfoxide reductase family.

It carries out the reaction L-methionyl-[protein] + [thioredoxin]-disulfide + H2O = L-methionyl-(S)-S-oxide-[protein] + [thioredoxin]-dithiol. The enzyme catalyses [thioredoxin]-disulfide + L-methionine + H2O = L-methionine (S)-S-oxide + [thioredoxin]-dithiol. Functionally, has an important function as a repair enzyme for proteins that have been inactivated by oxidation. Catalyzes the reversible oxidation-reduction of methionine sulfoxide in proteins to methionine. The polypeptide is Peptide methionine sulfoxide reductase MsrA (Xylella fastidiosa (strain M12)).